Consider the following 2248-residue polypeptide: Putative Polycomb group protein ASXL3 (2248 aa).

Positions 10–84 constitute an HTH HARE-type domain; that stretch reads RTWAEAARLA…KSGLYALKKE (75 aa). A disordered region spans residues 156–232; that stretch reads ALKQALRQQQ…GKQTSQHLKR (77 aa). Over residues 203 to 216 the composition is skewed to basic and acidic residues; that stretch reads KNGEADSSDKEMKH. Over residues 219–228 the composition is skewed to polar residues; it reads KSPTGKQTSQ. Positions 254 to 363 constitute a DEUBAD domain; it reads PGSILVNTNL…FERFYGEKLG (110 aa). Disordered regions lie at residues 368–414, 547–583, 607–643, 703–726, 762–853, 869–1052, 1123–1152, 1183–1203, 1431–1462, 1573–1596, and 1990–2068; these read ESVK…PASP, TSSM…EGQF, CISE…CTPA, EASP…PLTS, ERMA…ASIP, LQRT…TGAR, TSKE…ETKM, QQSL…VHSS, KLSA…GFAP, TAPS…ADTT, and LSPN…KRLS. Polar residues-rich tracts occupy residues 371–389, 395–407, 564–580, 607–617, and 624–643; these read KLTT…SCGT, SAQT…QPKS, AVET…SSLE, CISETSFSSES, and SLPS…CTPA. Positions 796–818 are enriched in polar residues; the sequence is NLTSQQKNLSNTPEPIIMSSSSI. Positions 937 to 949 are enriched in low complexity; it reads SHTSKSSEPSKSP. Basic and acidic residues-rich tracts occupy residues 950 to 968, 975 to 987, and 997 to 1008; these read DGIR…KTAE, CKEK…DDQS, and PEKEQPPREEPR. A compositionally biased stretch (polar residues) spans 1036–1046; sequence RASTSTSVSGG. Over residues 2016–2046 the composition is skewed to pro residues; that stretch reads HPPPPPPPPPPPPLALPPPPPPPPPLPPPLP. Residues 2210–2247 form a PHD-type; atypical zinc finger; the sequence is ELKCSCRLKAMIVCKGCGAFCHDDCIGPSKLCVACLVV.

This sequence belongs to the Asx family. In terms of assembly, core component of the polycomb repressive deubiquitinase (PR-DUB) complex, at least composed of BAP1, one of ASXL1, ASXL2 or (probably) ASXL3, and one of MBD5 or MBD6. Distinct combinations of ASXL and MBD proteins may preferentially bind specific histone modification marks. The PR-DUB core associates with a number of accessory proteins, including FOXK1, FOXK2, KDM1B, HCFC1 and OGT; KDM1B specifically associates with ASXL2 PR-DUB complexes. Interacts (via PHD domain) with MBD5 and MBD6 (via MBD domain); the interaction is probably direct and mediates association of MBD proteins with the PR-DUB core. As to expression, expressed in pancreatic islets, testis, neuroblastoma, head and neck tumor.

The protein localises to the nucleus. Putative Polycomb group (PcG) protein. PcG proteins act by forming multiprotein complexes, which are required to maintain the transcriptionally repressive state of homeotic genes throughout development. PcG proteins are not required to initiate repression, but to maintain it during later stages of development. They probably act via methylation of histones, rendering chromatin heritably changed in its expressibility. Non-catalytic component of the PR-DUB complex, a complex that specifically mediates deubiquitination of histone H2A monoubiquitinated at 'Lys-119' (H2AK119ub1). The PR-DUB complex is an epigenetic regulator of gene expression and acts as a transcriptional coactivator, affecting genes involved in development, cell communication, signaling, cell proliferation and cell viability. ASXL1, ASXL2 and ASXL3 function redundantly in the PR-DUB complex and are essential for chromatin recruitment and transcriptional activation of associated genes. This Homo sapiens (Human) protein is Putative Polycomb group protein ASXL3 (ASXL3).